A 280-amino-acid chain; its full sequence is Protein FAM131C (280 aa).

A disordered region spans residues 195–280 (QDSLPSGPSQ…LWEEDEVFYN (86 aa)). Over residues 197–211 (SLPSGPSQDDSLQAF) the composition is skewed to polar residues. The span at 215–227 (SPSPDSCPSPEEP) shows a compositional bias: pro residues.

This sequence belongs to the FAM131 family.

The protein is Protein FAM131C (FAM131C) of Homo sapiens (Human).